Here is a 425-residue protein sequence, read N- to C-terminus: MAASSTRLRCLYASSSTWKTSPSQSLISLSRRYATTSSAPPTPSDESSSTLPKRRKTTTFKDKLNAGPSFADFVSGNGDSNNAPLDASEAYALETVMIPGPAGRGKKEHTRLPSWLKTPIPDSTNYKRIKKDLRGLKLNTVCEEARCPNISDCWGGSDKSAATATIMLMGDSCTRGCRFCSVKTLRTPGPLDPHEPENTAEALSRWGLGYVVLTSVDRDDLSDGGAHHFAETVIKIKQKAPGILVECLTGDFAGDFDMVALVAKSGLDVYAHNVETVEALTPHVRDRRATFQQSLRVLEAAKRAKPSLITKTSMMLGFGETEDQMWDALRQLRASNVDVVTFGQYMRPTKRHMAVHEYVTPDKFELWRQRALEMGFLYVASGPLVRSSYKAGEAFIENVLKKRRGVGNTPGAEVTTEVPVDALAK.

Residues 1 to 33 constitute a mitochondrion transit peptide; the sequence is MAASSTRLRCLYASSSTWKTSPSQSLISLSRRY. Residues 17–55 form a disordered region; it reads TWKTSPSQSLISLSRRYATTSSAPPTPSDESSSTLPKRR. The segment covering 33 to 51 has biased composition (polar residues); it reads YATTSSAPPTPSDESSSTL. Residues cysteine 142, cysteine 147, cysteine 153, cysteine 173, cysteine 177, cysteine 180, and serine 388 each contribute to the [4Fe-4S] cluster site. A Radical SAM core domain is found at 156-377; that stretch reads GSDKSAATAT…RQRALEMGFL (222 aa).

It belongs to the radical SAM superfamily. Lipoyl synthase family. [4Fe-4S] cluster is required as a cofactor.

The protein resides in the mitochondrion. The catalysed reaction is [[Fe-S] cluster scaffold protein carrying a second [4Fe-4S](2+) cluster] + N(6)-octanoyl-L-lysyl-[protein] + 2 oxidized [2Fe-2S]-[ferredoxin] + 2 S-adenosyl-L-methionine + 4 H(+) = [[Fe-S] cluster scaffold protein] + N(6)-[(R)-dihydrolipoyl]-L-lysyl-[protein] + 4 Fe(3+) + 2 hydrogen sulfide + 2 5'-deoxyadenosine + 2 L-methionine + 2 reduced [2Fe-2S]-[ferredoxin]. The protein operates within protein modification; protein lipoylation via endogenous pathway; protein N(6)-(lipoyl)lysine from octanoyl-[acyl-carrier-protein]: step 2/2. In terms of biological role, catalyzes the radical-mediated insertion of two sulfur atoms into the C-6 and C-8 positions of the octanoyl moiety bound to the lipoyl domains of lipoate-dependent enzymes, thereby converting the octanoylated domains into lipoylated derivatives. This chain is Lipoyl synthase, mitochondrial, found in Talaromyces marneffei (strain ATCC 18224 / CBS 334.59 / QM 7333) (Penicillium marneffei).